Consider the following 346-residue polypeptide: Phosphate acyltransferase (346 aa).

This sequence belongs to the PlsX family. As to quaternary structure, homodimer. Probably interacts with PlsY.

The protein localises to the cytoplasm. It catalyses the reaction a fatty acyl-[ACP] + phosphate = an acyl phosphate + holo-[ACP]. It functions in the pathway lipid metabolism; phospholipid metabolism. Its function is as follows. Catalyzes the reversible formation of acyl-phosphate (acyl-PO(4)) from acyl-[acyl-carrier-protein] (acyl-ACP). This enzyme utilizes acyl-ACP as fatty acyl donor, but not acyl-CoA. The protein is Phosphate acyltransferase of Brucella melitensis biotype 2 (strain ATCC 23457).